Here is a 296-residue protein sequence, read N- to C-terminus: 4-hydroxybenzoate octaprenyltransferase (296 aa).

8 consecutive transmembrane segments (helical) span residues 28 to 48, 55 to 75, 102 to 122, 145 to 167, 174 to 196, 219 to 239, 241 to 261, and 275 to 295; these read PIGI…AGNG, VLIF…INDF, AVML…CTNA, TYYP…FTAA, SAWL…YAMV, VIIL…GNRF, LGGW…WEFW, and FLHN…DYAL.

It belongs to the UbiA prenyltransferase family. Mg(2+) serves as cofactor.

It is found in the cell inner membrane. The catalysed reaction is all-trans-octaprenyl diphosphate + 4-hydroxybenzoate = 4-hydroxy-3-(all-trans-octaprenyl)benzoate + diphosphate. Its pathway is cofactor biosynthesis; ubiquinone biosynthesis. Its function is as follows. Catalyzes the prenylation of para-hydroxybenzoate (PHB) with an all-trans polyprenyl group. Mediates the second step in the final reaction sequence of ubiquinone-8 (UQ-8) biosynthesis, which is the condensation of the polyisoprenoid side chain with PHB, generating the first membrane-bound Q intermediate 3-octaprenyl-4-hydroxybenzoate. The chain is 4-hydroxybenzoate octaprenyltransferase from Pseudomonas entomophila (strain L48).